Reading from the N-terminus, the 521-residue chain is Sodium/hydrogen exchanger 5 (521 aa).

Residues 1–23 (MEEVMISPVEHDPQGQVKQQQAA) are Cytoplasmic-facing. A helical membrane pass occupies residues 24–44 (GVGILLQIMMLVLSFVLGHVL). Residues 45–48 (RRHR) lie on the Lumenal side of the membrane. Residues 49–69 (FHYLPEASGSLLIGLIVGILA) traverse the membrane as a helical segment. Over 70–86 (NISDTETSIRTWFNFHE) the chain is Cytoplasmic. The helical intramembrane region spans 87–107 (EFFFLFLLPPIIFQSGFSLQP). At 108–115 (KPFFSNFG) the chain is on the cytoplasmic side. A helical membrane pass occupies residues 116 to 136 (AIVTFAIIGTFVASVVTGGLV). Residues 137–141 (YLGGS) lie on the Lumenal side of the membrane. Intramembrane regions (helical) lie at residues 142 to 162 (MYLM…LISA) and 166 to 186 (VTVL…ALVF). At 187–222 (GESVLNDAMAISLYRTMSLVNRQSSSGEHFFMVVIR) the chain is on the lumenal side. A helical membrane pass occupies residues 223–243 (FFETFAGSMSAGVGVGFTSAL). Residues 244 to 271 (LFKYAGLDTENLQNLECCLFVLFPYFSY) are Cytoplasmic-facing. The chain crosses the membrane as a helical span at residues 272–292 (MLAEGVGLSGIVSILFTGIVM). Residues 293 to 310 (KRYTFSNLSEASQSFVSS) lie on the Lumenal side of the membrane. Asparagine 299 carries an N-linked (GlcNAc...) asparagine glycan. A helical membrane pass occupies residues 311 to 331 (FFHLISSLAETFTFIYMGFDI). At 332-340 (AMEQHSWSH) the chain is on the cytoplasmic side. A helical transmembrane segment spans residues 341-361 (VGFILFSILFIGVARAVNVFG). Topologically, residues 362–382 (CAYLVNLFRQENQKIPMKHQK) are lumenal. A helical membrane pass occupies residues 383-402 (ALWYSGLRGAMAFALALQSL). The Cytoplasmic portion of the chain corresponds to 403-411 (HDLPEGHGQ). A helical transmembrane segment spans residues 412-432 (IIFTATTTIVVVTVLLIGGST). Topologically, residues 433-521 (GKMLEALEVV…NSGDGDGDGE (89 aa)) are lumenal. The interval 453-480 (GFEESDHQYVPPPFSIGASSDEDTSSSG) is disordered. Over residues 467-480 (SIGASSDEDTSSSG) the composition is skewed to low complexity.

Belongs to the monovalent cation:proton antiporter 1 (CPA1) transporter (TC 2.A.36) family. In terms of tissue distribution, expressed in roots, leaves, stems, flowers and siliques. Detected at low levels in roots and shoots.

Its subcellular location is the endosome membrane. The protein localises to the golgi apparatus. The protein resides in the trans-Golgi network membrane. It is found in the golgi stack membrane. It catalyses the reaction Na(+)(in) + H(+)(out) = Na(+)(out) + H(+)(in). It carries out the reaction K(+)(in) + H(+)(out) = K(+)(out) + H(+)(in). Its function is as follows. Involved in trafficking to the vacuole. Required for cell proliferation and cell expansion, but not for cell differentiation. Acts in low affinity electroneutral exchange of protons for cations such as Na(+) or K(+) across membranes. May also exchange Li(+) and Cs(+) with a lower affinity. The chain is Sodium/hydrogen exchanger 5 (NHX5) from Arabidopsis thaliana (Mouse-ear cress).